Here is a 505-residue protein sequence, read N- to C-terminus: MFSLQDICRKYLFQLPDSFDEYTLQVLGLYWEKHGSLQRIRKDAVFVQRNLIISINEALRIAASEGNGRVVKLLLSWEGNFHYVIIGALEGDHYDLIHKYGSQIEDYHMILSSIHNANTFEKCHELSNCDMWCLIQNAIKYNMLPILQKHRNILTHEGENQELFEMACEEQKYDIVLWIGQTLMLNEPEFIFDIAFERIDFSLLTMGYSLLFNNKMSSIDIHDEEDLISLLTEHLEKAATKGCFFFMLETLKHGGNVNMAVLSKAVEYNHRKILDYFIRQKCLSRKDIEKLLLVAISNSASKKTLNLLLSYLNHSVKNIIGKIVQSVLKNGDFTIIIFLKKKKINLVEPALIGFINYYYSYCFLEQFIHEFDIRPEKMIKMAARKGKLNMIIEFLNEKYVHKDDLGAIFKFLKNLVCTMKHKKGKETLIVLIHKIYQVIQLETKEKFKLLRFYVMHDATIQFISMYKDCFNLAGFKPFLLECLDIAIKKNYPDMIRNIETLLKCE.

Belongs to the asfivirus MGF 505 family.

Its function is as follows. Plays a role in virus cell tropism, and may be required for efficient virus replication in macrophages. The chain is Protein MGF 505-4R from Ornithodoros (relapsing fever ticks).